Here is a 147-residue protein sequence, read N- to C-terminus: Nucleoside diphosphate kinase (147 aa).

Residues lysine 11, phenylalanine 59, arginine 87, threonine 93, arginine 104, and asparagine 114 each contribute to the ATP site. Histidine 117 serves as the catalytic Pros-phosphohistidine intermediate.

It belongs to the NDK family. Requires Mg(2+) as cofactor.

The protein localises to the cytoplasm. It carries out the reaction a 2'-deoxyribonucleoside 5'-diphosphate + ATP = a 2'-deoxyribonucleoside 5'-triphosphate + ADP. It catalyses the reaction a ribonucleoside 5'-diphosphate + ATP = a ribonucleoside 5'-triphosphate + ADP. Functionally, major role in the synthesis of nucleoside triphosphates other than ATP. The ATP gamma phosphate is transferred to the NDP beta phosphate via a ping-pong mechanism, using a phosphorylated active-site intermediate. In Sulfurisphaera tokodaii (strain DSM 16993 / JCM 10545 / NBRC 100140 / 7) (Sulfolobus tokodaii), this protein is Nucleoside diphosphate kinase.